Consider the following 238-residue polypeptide: Epoxyqueuosine reductase QueH (238 aa).

[4Fe-4S] cluster-binding residues include C43, C44, C129, and C132. C211 and C213 are joined by a disulfide.

The protein belongs to the QueH family.

It carries out the reaction epoxyqueuosine(34) in tRNA + AH2 = queuosine(34) in tRNA + A + H2O. The protein operates within tRNA modification; tRNA-queuosine biosynthesis. Functionally, catalyzes the conversion of epoxyqueuosine (oQ) to queuosine (Q), which is a hypermodified base found in the wobble positions of tRNA(Asp), tRNA(Asn), tRNA(His) and tRNA(Tyr). The sequence is that of Epoxyqueuosine reductase QueH from Staphylococcus epidermidis (strain ATCC 12228 / FDA PCI 1200).